The following is an 837-amino-acid chain: Leucine-zipper-like transcriptional regulator 1 (837 aa).

At Ala-2 the chain carries N-acetylalanine. Kelch repeat units follow at residues 76–125, 127–182, 184–235, 236–282, 292–338, and 396–447; these read AIYV…VYGS, MFVF…VYSD, LWIF…VCRD, KMFV…QRRY, HLYV…PERA, and AMYI…FVLG. Positions 324–352 are disordered; the sequence is SSDSEVGGAEMPERASSSEDASTLTSEER. BTB domains follow at residues 440 to 534 and 664 to 733; these read CDVE…KYPR and CDIT…NMPP.

The protein belongs to the LZTR1 family. As to quaternary structure, homodimer. Component of the BCR(LZTR1) E3 ubiquitin ligase complex, at least composed of CUL3, LZTR1 and RBX1. Interacts with Ras (K-Ras/KRAS, N-Ras/NRAS and H-Ras/HRAS). Interacts with RAF1. Interacts with SHOC2. Interacts with PPP1CB. Phosphorylated on tyrosine upon induction of apoptosis, leading to its degradation by the proteasome. In terms of tissue distribution, widely expressed.

Its subcellular location is the endomembrane system. It localises to the recycling endosome. The protein localises to the golgi apparatus. The protein operates within protein modification; protein ubiquitination. In terms of biological role, substrate-specific adapter of a BCR (BTB-CUL3-RBX1) E3 ubiquitin-protein ligase complex that mediates ubiquitination of Ras (K-Ras/KRAS, N-Ras/NRAS and H-Ras/HRAS). Is a negative regulator of RAS-MAPK signaling that acts by controlling Ras levels and decreasing Ras association with membranes. This chain is Leucine-zipper-like transcriptional regulator 1, found in Mus musculus (Mouse).